Here is a 557-residue protein sequence, read N- to C-terminus: Leucine-rich glioma-inactivated protein 1 (557 aa).

A signal peptide spans 1-34 (MESERSKRMGNACIPLKRIAYFLCLLSALLLTEG). Positions 35–72 (KKPAKPKCPAVCTCTKDNALCENARSIPRTVPPDVISL) constitute an LRRNT domain. LRR repeat units follow at residues 92 to 113 (SLQLLLFTSNSFDVISDDAFIG), 116 to 137 (HLEYLFIENNNIKSISRHTFRG), and 140 to 161 (SLIHLSLANNNLQTLPKDIFKG). The LRRCT domain occupies 173 to 223 (NSFNCDCKLKWLVEWLGHTNATVEDIYCEGPPEYKKRKINSLSSKDFDCII). A glycan (N-linked (GlcNAc...) asparagine) is linked at asparagine 192. 7 EAR repeats span residues 225–267 (EFAK…EWDH), 271–313 (TFRN…KRDS), 317–364 (KFIK…KWNG), 366–415 (GFYS…QWNK), 419–462 (SFTN…KWGG), 464–506 (SFQD…NWDA), and 510–552 (KFVK…KHVI). Asparagine 277 carries an N-linked (GlcNAc...) asparagine glycan. Asparagine 422 is a glycosylation site (N-linked (GlcNAc...) asparagine).

As to quaternary structure, oligomer. Interacts with KCNA1 within a complex containing KCNA1, KCNA4 and KCNAB1. Part of a complex containing ADAM22, DLG4/PSD95 and CACNG2 (stargazin). Can bind to ADAM11 and ADAM23. Post-translationally, glycosylated.

The protein resides in the secreted. It localises to the synapse. It is found in the cytoplasm. Functionally, regulates voltage-gated potassium channels assembled from KCNA1, KCNA4 and KCNAB1. It slows down channel inactivation by precluding channel closure mediated by the KCNAB1 subunit. Ligand for ADAM22 that positively regulates synaptic transmission mediated by AMPA-type glutamate receptors. Plays a role in suppressing the production of MMP1/3 through the phosphatidylinositol 3-kinase/ERK pathway. This Pan troglodytes (Chimpanzee) protein is Leucine-rich glioma-inactivated protein 1 (LGI1).